Here is a 518-residue protein sequence, read N- to C-terminus: Xylose import ATP-binding protein XylG (518 aa).

2 ABC transporter domains span residues 6–245 (LQMN…VGRE) and 262–507 (FEAR…LSQP). An ATP-binding site is contributed by 38–45 (GENGAGKS).

It belongs to the ABC transporter superfamily. Xylose importer (TC 3.A.1.2.4) family. As to quaternary structure, the complex is composed of two ATP-binding proteins (XylG), two transmembrane proteins (XylH) and a solute-binding protein (XylF).

It is found in the cell inner membrane. The enzyme catalyses D-xylose(out) + ATP + H2O = D-xylose(in) + ADP + phosphate + H(+). Part of the ABC transporter complex XylFGH involved in xylose import. Responsible for energy coupling to the transport system. The chain is Xylose import ATP-binding protein XylG from Pseudomonas fluorescens (strain Pf0-1).